A 272-amino-acid polypeptide reads, in one-letter code: Formamidopyrimidine-DNA glycosylase (272 aa).

Proline 2 serves as the catalytic Schiff-base intermediate with DNA. Glutamate 3 serves as the catalytic Proton donor. The Proton donor; for beta-elimination activity role is filled by lysine 57. Positions 90, 109, and 150 each coordinate DNA. The segment at histidine 235 to proline 269 adopts an FPG-type zinc-finger fold. The active-site Proton donor; for delta-elimination activity is arginine 259.

This sequence belongs to the FPG family. In terms of assembly, monomer. Zn(2+) is required as a cofactor.

The catalysed reaction is Hydrolysis of DNA containing ring-opened 7-methylguanine residues, releasing 2,6-diamino-4-hydroxy-5-(N-methyl)formamidopyrimidine.. The enzyme catalyses 2'-deoxyribonucleotide-(2'-deoxyribose 5'-phosphate)-2'-deoxyribonucleotide-DNA = a 3'-end 2'-deoxyribonucleotide-(2,3-dehydro-2,3-deoxyribose 5'-phosphate)-DNA + a 5'-end 5'-phospho-2'-deoxyribonucleoside-DNA + H(+). In terms of biological role, involved in base excision repair of DNA damaged by oxidation or by mutagenic agents. Acts as a DNA glycosylase that recognizes and removes damaged bases. Has a preference for oxidized purines, such as 7,8-dihydro-8-oxoguanine (8-oxoG). Has AP (apurinic/apyrimidinic) lyase activity and introduces nicks in the DNA strand. Cleaves the DNA backbone by beta-delta elimination to generate a single-strand break at the site of the removed base with both 3'- and 5'-phosphates. In Aliivibrio fischeri (strain ATCC 700601 / ES114) (Vibrio fischeri), this protein is Formamidopyrimidine-DNA glycosylase.